We begin with the raw amino-acid sequence, 330 residues long: Glucan endo-1,3-beta-glucosidase GIII (330 aa).

Positions 1–25 are cleaved as a signal peptide; it reads MARKGVDVAVALVLVALAAFPAVHS. The Proton donor role is filled by Glu-117. Glu-255 serves as the catalytic Nucleophile.

The protein belongs to the glycosyl hydrolase 17 family.

The catalysed reaction is Hydrolysis of (1-&gt;3)-beta-D-glucosidic linkages in (1-&gt;3)-beta-D-glucans.. Functionally, may provide a degree of protection against microbial invasion of germinated barley grain through its ability to degrade fungal cell wall polysaccharides. The protein is Glucan endo-1,3-beta-glucosidase GIII of Hordeum vulgare (Barley).